We begin with the raw amino-acid sequence, 534 residues long: MTREDLPDSTPEESKLPMEFQSPLLEKRRRPVVHPSAPAPLPKDYAFTFFDPNDPACQEILLDPQTSVPELFAIIRQWVPQVQHKIDIIGSEILKRGCHVNDRDGLTDMTLLHYACKAGAHGVGDPAAAVRLTNQLLLLGADITLRSRWTNMNALHYAAYFDVPELLRTLLKASKPKVLNSTCSDFNHGTAMHIAASNLCLGAVKCLLEHGANPSARNSKSQVPADVVPDPMDMGLDKADSAMIAKELKQLLLDAVPLTCNLPKITLPNYDNIPGNLMLASLGLKLGDRILLDAEKAGTLRFCGTTEFASGQWVGVELDEPDGKNDGSVGGIRYFICPPKQGIFAPVSKISKAPDQPPSSVTSTPRTPRVDFSRVTGKGRKEKKATHKKSLSVGSLDREGLKIEIGDQVLVAGQKQGIVRFYGKTDFAPGYWFGIELEKPTGKHDGSVFGVRYFTCSAKNGVFAPPSRVQRMGGPKDPQTDNNDMKKVHQVTMTQPKRNFTKVRTPKEIASENSMSRILFCCWFPWLLRAEMKS.

Positions 1 to 16 are enriched in basic and acidic residues; that stretch reads MTREDLPDSTPEESKL. A disordered region spans residues 1-33; sequence MTREDLPDSTPEESKLPMEFQSPLLEKRRRPVV. ANK repeat units follow at residues 107–148, 150–173, and 187–299; these read TDMT…LRSR, TNMN…LLKA, and NHGT…KAGT. The region spanning 304–346 is the CAP-Gly 1 domain; sequence GTTEFASGQWVGVELDEPDGKNDGSVGGIRYFICPPKQGIFAP. Residues 349–391 are disordered; that stretch reads KISKAPDQPPSSVTSTPRTPRVDFSRVTGKGRKEKKATHKKSL. The span at 358–367 shows a compositional bias: low complexity; sequence PSSVTSTPRT. Over residues 377–390 the composition is skewed to basic residues; that stretch reads GKGRKEKKATHKKS. The region spanning 423 to 465 is the CAP-Gly 2 domain; sequence GKTDFAPGYWFGIELEKPTGKHDGSVFGVRYFTCSAKNGVFAP. The interval 475–534 is goLD; the sequence is PKDPQTDNNDMKKVHQVTMTQPKRNFTKVRTPKEIASENSMSRILFCCWFPWLLRAEMKS.

As to quaternary structure, homodimer.

It is found in the cytoplasm. The protein resides in the golgi apparatus. It localises to the golgi stack. Its function is as follows. Functions as a cytoplasmic linker protein. Involved in TGN-endosome dynamics. The polypeptide is CAP-Gly domain-containing linker protein 3 (clip3) (Xenopus laevis (African clawed frog)).